Reading from the N-terminus, the 172-residue chain is Type IV secretion system putative outer membrane lipoprotein BRA0058/BS1330_II0058 (172 aa).

A signal peptide spans 1–15 (MRTLVMVACAVSLAA). Cys-16 is lipidated: N-palmitoyl cysteine. Cys-16 carries S-diacylglycerol cysteine lipidation. The 115-residue stretch at 58–172 (WPARPPKQTV…RRVDIEILRK (115 aa)) folds into the OmpA-like domain.

Its subcellular location is the cell outer membrane. The VirB system could be required for the establishment of the replication niche in the host. The chain is Type IV secretion system putative outer membrane lipoprotein BRA0058/BS1330_II0058 from Brucella suis biovar 1 (strain 1330).